A 181-amino-acid polypeptide reads, in one-letter code: Bifunctional protein PyrR (181 aa).

A PRPP-binding motif is present at residues 101–113; the sequence is VIVVDDVLYTGRT.

This sequence belongs to the purine/pyrimidine phosphoribosyltransferase family. PyrR subfamily. As to quaternary structure, homodimer and homohexamer; in equilibrium.

It carries out the reaction UMP + diphosphate = 5-phospho-alpha-D-ribose 1-diphosphate + uracil. In terms of biological role, regulates transcriptional attenuation of the pyrimidine nucleotide (pyr) operon by binding in a uridine-dependent manner to specific sites on pyr mRNA. This disrupts an antiterminator hairpin in the RNA and favors formation of a downstream transcription terminator, leading to a reduced expression of downstream genes. Functionally, also displays a weak uracil phosphoribosyltransferase activity which is not physiologically significant. This Bacillus velezensis (strain DSM 23117 / BGSC 10A6 / LMG 26770 / FZB42) (Bacillus amyloliquefaciens subsp. plantarum) protein is Bifunctional protein PyrR.